The chain runs to 258 residues: Probable splicing factor, arginine/serine-rich 3 (258 aa).

The region spanning Q9–G83 is the RRM 1 domain. Disordered stretches follow at residues T81 to R120 and A190 to Q258. Positions G97–G107 are enriched in basic and acidic residues. Over residues G108–P117 the composition is skewed to gly residues. In terms of domain architecture, RRM 2 spans Y123–D197. The span at G208–A223 shows a compositional bias: basic and acidic residues. Over residues S228 to S246 the composition is skewed to basic residues. The segment covering A247–Q258 has biased composition (low complexity).

The protein belongs to the splicing factor SR family. As to quaternary structure, interacts with spk-1. In terms of processing, directly phosphorylated by spk-1 in vitro on serine residues of the RS domain. Predominantly coexpressed with spk-1 in adult hermaphrodite germlines.

The protein resides in the nucleus. Functionally, plays an essential role in embryogenesis. The polypeptide is Probable splicing factor, arginine/serine-rich 3 (rsp-3) (Caenorhabditis elegans).